The sequence spans 650 residues: MKGLNKITCCLLAALLMPCAGHAENEQYGANFNNADIRQFVEIVGQHLGKTILIDPSVQGTISVRSNDTFSQQEYYQFFLSILDLYGYSVITLDNGFLKVVRSANVKTSPGMIADSSRPGVGDELVTRIVPLENVPARDLAPLLRQMMDAGSVGNVVHYEPSNVLILTGRASTINKLIEVIKRVDVIGTEKQQIIHLEYASAEDLAEILNQLISESHGKSQMPALLSAKIVADKRTNSLIISGPEKARQRITSLLKSLDVEESEEGNTRVYYLKYAKATNLVEVLTGVSEKLKDEKGNARKPSSSGAMDNVAITADEQTNSLVITADQSVQEKLATVIARLDIRRAQVLVEAIIVEVQDGNGLNLGVQWANKNVGAQQFTNTGLPIFNAAQGVADYKKNGGITSANPAWDMFSAYNGMAAGFFNGDWGVLLTALASNNKNDILATPSIVTLDNKLASFNVGQDVPVLSGSQTTSGDNVFNTVERKTVGTKLKVTPQVNEGDAVLLEIEQEVSSVDSSSNSTLGPTFNTRTIQNAVLVKTGETVVLGGLLDDFSKEQVSKVPLLGDIPLVGQLFRYTSTERAKRNLMVFIRPTIIRDDDVYRSLSKEKYTRYRQEQQQRIDGKSKALVGSEDLPVLDENTFNSHAPAPSSR.

Residues 1–23 form the signal peptide; it reads MKGLNKITCCLLAALLMPCAGHA. The N0 stretch occupies residues 24 to 122; it reads ENEQYGANFN…IADSSRPGVG (99 aa). The tract at residues 124–188 is N1; it reads ELVTRIVPLE…EVIKRVDVIG (65 aa). The N2 stretch occupies residues 189 to 263; it reads TEKQQIIHLE…LLKSLDVEES (75 aa). The tract at residues 266 to 342 is N3; it reads GNTRVYYLKY…KLATVIARLD (77 aa). Residues 345 to 596 form a secretin region; the sequence is RAQVLVEAII…VFIRPTIIRD (252 aa). Positions 598–650 are s domain; that stretch reads DVYRSLSKEKYTRYRQEQQQRIDGKSKALVGSEDLPVLDENTFNSHAPAPSSR.

This sequence belongs to the bacterial secretin family. GSP D subfamily. In terms of assembly, forms a cylindrical channel with 15 subunits; approximately 25% of the particles have 16-subunit channels. Closed pentadeacameric channels are 180 Angstroms long and 145 Angstroms in diameter. Each subunit turns in a clock-wise manner around the channel.

It localises to the cell outer membrane. Its function is as follows. Involved in a type II secretion system (T2SS, formerly general secretion pathway, GSP) for the export of folded proteins across the outer membrane. This subunit would form the outer membrane channel. This is Putative secretin GspD (gspD) from Escherichia coli (strain K12).